The chain runs to 374 residues: Putative 12-oxophytodienoate reductase 5 (374 aa).

FMN contacts are provided by residues 30–32, Ala-63, and Gln-105; that span reads PMT. A substrate-binding site is contributed by 177–180; it reads HGAN. Tyr-182 acts as the Proton donor in catalysis. Arg-229 contacts FMN. Position 270 (Arg-270) interacts with substrate. FMN-binding positions include Gly-300 and 321-322; that span reads GR.

This sequence belongs to the NADH:flavin oxidoreductase/NADH oxidase family. FMN serves as cofactor.

Functionally, putative oxophytodienoate reductase that may be involved in the biosynthesis or metabolism of oxylipin signaling molecules. The polypeptide is Putative 12-oxophytodienoate reductase 5 (OPR5) (Oryza sativa subsp. japonica (Rice)).